We begin with the raw amino-acid sequence, 208 residues long: ATP synthase subunit beta, chloroplastic (208 aa).

This sequence belongs to the ATPase alpha/beta chains family. As to quaternary structure, F-type ATPases have 2 components, CF(1) - the catalytic core - and CF(0) - the membrane proton channel. CF(1) has five subunits: alpha(3), beta(3), gamma(1), delta(1), epsilon(1). CF(0) has four main subunits: a(1), b(1), b'(1) and c(9-12).

The protein resides in the plastid. It is found in the chloroplast thylakoid membrane. The enzyme catalyses ATP + H2O + 4 H(+)(in) = ADP + phosphate + 5 H(+)(out). In terms of biological role, produces ATP from ADP in the presence of a proton gradient across the membrane. The catalytic sites are hosted primarily by the beta subunits. This chain is ATP synthase subunit beta, chloroplastic (atpB), found in Hypolepis hostilis (Fern).